Reading from the N-terminus, the 258-residue chain is Thrombin-like enzyme ancrod-2 (258 aa).

Positions 1–18 (MVLIRVLANLVILQLSYA) are cleaved as a signal peptide. Positions 19-24 (QKSSEL) are excised as a propeptide. Residues 25–251 (VIGGDECNIN…HLHWILSIMA (227 aa)) enclose the Peptidase S1 domain. Cystine bridges form between cysteine 31-cysteine 165, cysteine 52-cysteine 68, cysteine 102-cysteine 256, cysteine 144-cysteine 212, cysteine 176-cysteine 191, and cysteine 202-cysteine 227. Active-site charge relay system residues include histidine 67 and aspartate 112. N-linked (GlcNAc...) asparagine glycans are attached at residues asparagine 123 and asparagine 172. Serine 206 functions as the Charge relay system in the catalytic mechanism. The N-linked (GlcNAc...) asparagine glycan is linked to asparagine 253.

Belongs to the peptidase S1 family. Snake venom subfamily. In terms of assembly, monomer. In terms of tissue distribution, expressed by the venom gland.

Its subcellular location is the secreted. The enzyme catalyses Selective cleavage of Arg-|-Xaa bond in fibrinogen, to form fibrin, and release fibrinopeptide A. The specificity of further degradation of fibrinogen varies with species origin of the enzyme.. Thrombin-like snake venom serine protease. Cleaves fibrinogen (FGA) to split of fibrinopeptides AM, AO, and AY; the aberrant fibrinogen is then incapable of being cross-linked, forming easily dispersible clots. This is Thrombin-like enzyme ancrod-2 from Calloselasma rhodostoma (Malayan pit viper).